A 46-amino-acid polypeptide reads, in one-letter code: Photosystem II reaction center protein K (46 aa).

A propeptide spanning residues 1 to 9 (MLILFNTFA) is cleaved from the precursor. A helical membrane pass occupies residues 25-45 (LPLIPLFFFLLVFVWQAAVGF).

Belongs to the PsbK family. As to quaternary structure, PSII is composed of 1 copy each of membrane proteins PsbA, PsbB, PsbC, PsbD, PsbE, PsbF, PsbH, PsbI, PsbJ, PsbK, PsbL, PsbM, PsbT, PsbX, PsbY, Psb30/Ycf12, peripheral proteins PsbO, CyanoQ (PsbQ), PsbU, PsbV and a large number of cofactors. It forms dimeric complexes.

It is found in the cellular thylakoid membrane. Its function is as follows. One of the components of the core complex of photosystem II (PSII). PSII is a light-driven water:plastoquinone oxidoreductase that uses light energy to abstract electrons from H(2)O, generating O(2) and a proton gradient subsequently used for ATP formation. It consists of a core antenna complex that captures photons, and an electron transfer chain that converts photonic excitation into a charge separation. The chain is Photosystem II reaction center protein K from Prochlorococcus marinus (strain MIT 9301).